The chain runs to 976 residues: 5'-3' exoribonuclease 2 homolog (976 aa).

The CCHC-type zinc finger occupies 264–281 (RACELCGQYGHELKECRG). The segment covering 411–420 (DEERFKENQK) has biased composition (basic and acidic residues). The interval 411–442 (DEERFKENQKNKKARMQQYGRGRGGRGRGRGQ) is disordered. Residues 535–788 (DIRLYESGWK…GICVLYEDPE (254 aa)) form an interaction with paxt-1 region. Residues 815 to 976 (WNERRDGRFN…GGYQGNSSWR (162 aa)) are disordered. Over residues 856–866 (DRQGGNDNYRG) the composition is skewed to low complexity.

This sequence belongs to the 5'-3' exonuclease family. XRN2/RAT1 subfamily. As to quaternary structure, interacts with paxt-1 (via N-terminus); the interaction is direct and results in stabilization of xrn-2 in the complex.

Its subcellular location is the nucleus. Its function is as follows. Possesses 5'-&gt;3' exoribonuclease activity. Plays a role in maintenance of steady-state concentration and turnover of microRNAs (miRNA) by degradation of mature miRNA. Degradation role is enhanced when in complex with paxt-1. Partially redundant to xrn-1 in miRNA guide strand degradation. Implicated in differential regulation of mRNAs such as let-7 by controlling the accumulation of mature miRNA. Positively regulates molting of the pharyngeal cuticle. The polypeptide is 5'-3' exoribonuclease 2 homolog (Caenorhabditis briggsae).